A 75-amino-acid chain; its full sequence is DNA-directed RNA polymerase subunit Rpo5 (75 aa).

The protein belongs to the archaeal Rpo5/eukaryotic RPB5 RNA polymerase subunit family. In terms of assembly, part of the RNA polymerase complex.

It is found in the cytoplasm. It carries out the reaction RNA(n) + a ribonucleoside 5'-triphosphate = RNA(n+1) + diphosphate. Its function is as follows. DNA-dependent RNA polymerase (RNAP) catalyzes the transcription of DNA into RNA using the four ribonucleoside triphosphates as substrates. The chain is DNA-directed RNA polymerase subunit Rpo5 from Pyrobaculum aerophilum (strain ATCC 51768 / DSM 7523 / JCM 9630 / CIP 104966 / NBRC 100827 / IM2).